The chain runs to 247 residues: 3-oxoacyl-[acyl-carrier-protein] reductase MabA (247 aa).

NADP(+) is bound by residues 25 to 27 (RGI), R47, 61 to 62 (DV), G90, Y153, K157, I186, and R197. Residue Y153 is the Proton acceptor of the active site.

Belongs to the short-chain dehydrogenases/reductases (SDR) family. Homotetramer.

It localises to the secreted. Its subcellular location is the cell wall. It carries out the reaction a (3R)-hydroxyacyl-[ACP] + NADP(+) = a 3-oxoacyl-[ACP] + NADPH + H(+). Its pathway is lipid metabolism; mycolic acid biosynthesis. Functionally, part of the mycobacterial fatty acid elongation system FAS-II, which is involved in mycolic acid biosynthesis. Catalyzes the NADPH-dependent reduction of beta-ketoacyl derivatives, the second step of the FAS-II elongation cycle. The sequence is that of 3-oxoacyl-[acyl-carrier-protein] reductase MabA from Mycobacterium bovis (strain ATCC BAA-935 / AF2122/97).